Reading from the N-terminus, the 188-residue chain is Selenoprotein S B (188 aa).

A helical membrane pass occupies residues 29–49 (EALSNYGWYILLGCIVIYFLI). The segment covering 116-125 (TWDRMQEGKS) has biased composition (basic and acidic residues). The disordered stretch occupies residues 116–188 (TWDRMQEGKS…RGPSSGGSUG (73 aa)). A compositionally biased stretch (low complexity) spans 136 to 147 (ASPRTSTSSSAP). A non-standard amino acid (selenocysteine) is located at residue Sec-187.

The protein belongs to the selenoprotein S family.

It is found in the endoplasmic reticulum membrane. The protein resides in the cytoplasm. In terms of biological role, involved in the degradation process of misfolded endoplasmic reticulum (ER) luminal proteins. Participates in the transfer of misfolded proteins from the ER to the cytosol, where they are destroyed by the proteasome in a ubiquitin-dependent manner. This is Selenoprotein S B (vimp-b) from Xenopus laevis (African clawed frog).